The following is a 348-amino-acid chain: Oxidase ucsJ (348 aa).

It belongs to the avfA family.

The protein operates within mycotoxin biosynthesis. In terms of biological role, oxidase; part of the gene cluster that mediates the biosynthesis of UCS1025A, a member of the pyrrolizidinone family that acts as a strong telomerase inhibitor and displays potent antibacterial and antitumor properties. These compounds share a hemiaminal-containing pyrrolizidinone core fused with a gamma-lactone, giving a furopyrrolizidine that is connected to a decalin fragment. The polyketide synthase module (PKS) of the PKS-NRPS ucsA is responsible for the synthesis of the polyketide backbone via the condensation of an acetyl-CoA starter unit with 6 malonyl-CoA units. The downstream nonribosomal peptide synthetase (NRPS) module then amidates the carboxyl end of the polyketide with a 2S,3S-methylproline derived from L-isoleucine by the 2-oxoglutarate-dependent dioxygenase ucsF which converts L-isoleucine to (4S,5S)-4-methylpyrroline-5-carboxylate that is further converted to 2S,3S-methylproline by the pyrroline-5-carboxylate reductase ucsG. Reductive release of the completed aminoacyl polyketide from the assembly line can form the 3-pyrrolin-2-one structure via an intramolecular Knoevenagel reaction. Because ucsA lacks a designated enoylreductase (ER) domain, the required activity is provided the enoyl reductase ucsL. This keto acyclic precursor is the substrate of the Diels-Alderase ucsH, that catalyzes the Diels-Alder cycloaddition. Oxidation of the 3S-methyl group to a carboxylate by the cytochrome P450 monooxygenase ucsK allows an oxa-Michael cyclization that might involve the reductase/dehydrogenase ucsI and which furnishes the furopyrrolizidine. The oxidase ucsJ likely plays a critical role in stereoselective reduction of the C5-C6 double bond to afford the required R-configured carboxylate group. Further enolization and oxidation at C5 by an unidentified enzyme affords the last intermediate that can undergo oxa-Michael cyclization to yield UCS1025A. The chain is Oxidase ucsJ from Acremonium sp.